Here is a 314-residue protein sequence, read N- to C-terminus: Oxaloacetate tautomerase FAHD2A, mitochondrial (314 aa).

Residues 1–84 (MLGSSGRRLL…ATLSVVRRAL (84 aa)) constitute a mitochondrion transit peptide. Mg(2+) is bound by residues Glu-159, Glu-161, and Asp-190.

It belongs to the FAH family. Mg(2+) is required as a cofactor. It depends on Mn(2+) as a cofactor.

The protein resides in the mitochondrion. The catalysed reaction is oxaloacetate = enol-oxaloacetate. Its function is as follows. Tautomerase that converts enol-oxaloacetate, a strong inhibitor of succinate dehydrogenase, to the physiological keto form of oxaloacetate. It is thereby required to maximize aerobic respiration efficiency by preventing succinate dehydrogenase inhibition. The polypeptide is Oxaloacetate tautomerase FAHD2A, mitochondrial (Bos taurus (Bovine)).